The following is a 72-amino-acid chain: Penaeidin-2a (72 aa).

The first 21 residues, 1–21 (MRLVVCLVFLASFALVCQGEA), serve as a signal peptide directing secretion. Disulfide bonds link C45-C59, C48-C66, and C60-C67. K71 carries the post-translational modification Lysine amide.

In terms of tissue distribution, higher expression in hemocytes and to a lesser extent in heart, testis, gills, intestine, lymphoid organ and hepatopancreas. Traces in eyes and subcuticular epithelium. Not present in the brain.

It is found in the cytoplasmic granule. In terms of biological role, antibacterial activity against M.luteus and E.coli bacteria. Antifungal activity against N.crassa and F.oxysporum. Presents chitin-binding activity. This is Penaeidin-2a from Penaeus vannamei (Whiteleg shrimp).